Consider the following 208-residue polypeptide: Small ribosomal subunit protein uS4 (208 aa).

The S4 RNA-binding domain maps to 98–161 (QRLDNVVYRM…KTNPQIVRAI (64 aa)).

The protein belongs to the universal ribosomal protein uS4 family. Part of the 30S ribosomal subunit. Contacts protein S5. The interaction surface between S4 and S5 is involved in control of translational fidelity.

Its function is as follows. One of the primary rRNA binding proteins, it binds directly to 16S rRNA where it nucleates assembly of the body of the 30S subunit. Functionally, with S5 and S12 plays an important role in translational accuracy. The protein is Small ribosomal subunit protein uS4 of Campylobacter fetus subsp. fetus (strain 82-40).